The following is a 605-amino-acid chain: Xylan O-acetyltransferase 7 (605 aa).

At 1–124 (MKKKKNGMGA…AKQPSPRRTP (124 aa)) the chain is on the cytoplasmic side. A disordered region spans residues 86 to 126 (PCHLLPIQGQGQMQMQQRRKPPPAAAPVAAKQPSPRRTPGP). The helical; Signal-anchor for type II membrane protein transmembrane segment at 125-145 (GPLSFAGALLSLLVVATFLYI) threads the bilayer. Residues 146-605 (NDHGNMMPPH…LYAHIVAHAA (460 aa)) are Lumenal-facing. Residues asparagine 192 and asparagine 218 are each glycosylated (N-linked (GlcNAc...) asparagine). Disulfide bonds link cysteine 243–cysteine 296, cysteine 267–cysteine 332, cysteine 276–cysteine 584, and cysteine 499–cysteine 580. Positions 319–321 (GDS) match the GDS motif motif. The Nucleophile role is filled by serine 321. 4 N-linked (GlcNAc...) asparagine glycosylation sites follow: asparagine 351, asparagine 363, asparagine 471, and asparagine 508. The Proton donor role is filled by aspartate 579. Positions 579 to 582 (DCIH) match the DXXH motif motif. Catalysis depends on histidine 582, which acts as the Proton acceptor.

Belongs to the PC-esterase family. TBL subfamily. Expressed in roots, leaves and stems.

It localises to the golgi apparatus membrane. Its function is as follows. Xylan acetyltransferase required for 2-O- and 3-O-monoacetylation of xylosyl residues in xylan. Catalyzes the 2-O-acetylation of xylan, followed by nonenzymatic acetyl migration to the O-3 position, resulting in products that are monoacetylated at both O-2 and O-3 positions. This chain is Xylan O-acetyltransferase 7, found in Oryza sativa subsp. japonica (Rice).